The sequence spans 123 residues: Large ribosomal subunit protein uL14 (123 aa).

The protein belongs to the universal ribosomal protein uL14 family. In terms of assembly, part of the 50S ribosomal subunit. Forms a cluster with proteins L3 and L19. In the 70S ribosome, L14 and L19 interact and together make contacts with the 16S rRNA in bridges B5 and B8.

Functionally, binds to 23S rRNA. Forms part of two intersubunit bridges in the 70S ribosome. The polypeptide is Large ribosomal subunit protein uL14 (Actinobacillus succinogenes (strain ATCC 55618 / DSM 22257 / CCUG 43843 / 130Z)).